Reading from the N-terminus, the 624-residue chain is Sulfite reductase [ferredoxin] (624 aa).

Residues tyrosine 52 to cysteine 137 constitute a cross-link (3'-(S-cysteinyl)-tyrosine (Tyr-Cys)). [4Fe-4S] cluster is bound by residues cysteine 446, cysteine 452, cysteine 491, and cysteine 495. Siroheme is bound at residue cysteine 495.

The protein belongs to the nitrite and sulfite reductase 4Fe-4S domain family. Monomer. It depends on siroheme as a cofactor. [4Fe-4S] cluster is required as a cofactor.

The enzyme catalyses hydrogen sulfide + 6 oxidized [2Fe-2S]-[ferredoxin] + 3 H2O = sulfite + 6 reduced [2Fe-2S]-[ferredoxin] + 7 H(+). Its function is as follows. Catalyzes the reduction of sulfite to sulfide, a step in the biosynthesis of sulfur-containing amino acids and cofactors. The chain is Sulfite reductase [ferredoxin] (sir) from Synechococcus elongatus (strain ATCC 33912 / PCC 7942 / FACHB-805) (Anacystis nidulans R2).